The following is a 478-amino-acid chain: Dihydrolipoyl dehydrogenase (478 aa).

FAD contacts are provided by residues 34–49 (EKYIGKEGKVALGGTC), Lys-58, and Gly-122. A disulfide bridge links Cys-49 with Cys-54. Residues 188–192 (GAGVI), Glu-211, Val-245, and 276–279 (AVGR) contribute to the NAD(+) site. Residues Asp-319 and Ala-327 each contribute to the FAD site. The active-site Proton acceptor is the His-451.

Belongs to the class-I pyridine nucleotide-disulfide oxidoreductase family. Homodimer. The cofactor is FAD.

It is found in the cytoplasm. It catalyses the reaction N(6)-[(R)-dihydrolipoyl]-L-lysyl-[protein] + NAD(+) = N(6)-[(R)-lipoyl]-L-lysyl-[protein] + NADH + H(+). Functionally, the branched-chain alpha-keto dehydrogenase complex catalyzes the overall conversion of alpha-keto acids to acyl-CoA and CO(2). It contains multiple copies of 3 enzymatic components: branched-chain alpha-keto acid decarboxylase (E1), lipoamide acyltransferase (E2) and lipoamide dehydrogenase (E3). In terms of biological role, also acts in the glycine cleavage system. The sequence is that of Dihydrolipoyl dehydrogenase (lpdG) from Pseudomonas aeruginosa (strain ATCC 15692 / DSM 22644 / CIP 104116 / JCM 14847 / LMG 12228 / 1C / PRS 101 / PAO1).